Here is a 297-residue protein sequence, read N- to C-terminus: MNREHAKAHLLLEALPYIRNFYGQTVVIKYGGHAMVDEQLQESFALNVILLKYIGINPVIVHGGGPQIGRMLKLLNIESQFKQGLRVTDDATMDVVEMVLVGKVNKNIVNLINLKGGSAVGLSGKDGRLITARKLEMVLERGDAPPEIIDLGKVGEVTGINTQLITTLLAQGFIPVIAPVGVDEDGETYNINADTVAGAVAAALGAKRLVLLTDVSGVLDKDKTLISSLDIKEASQAMADGVLVGGMIPKVSCCMEAVDAGVEKAHILDGRVENCIILELFTRSGIGTEIVCKRCQA.

Substrate-binding positions include 64 to 65, arginine 86, and asparagine 190; that span reads GG.

Belongs to the acetylglutamate kinase family. ArgB subfamily.

Its subcellular location is the cytoplasm. It carries out the reaction N-acetyl-L-glutamate + ATP = N-acetyl-L-glutamyl 5-phosphate + ADP. It functions in the pathway amino-acid biosynthesis; L-arginine biosynthesis; N(2)-acetyl-L-ornithine from L-glutamate: step 2/4. Functionally, catalyzes the ATP-dependent phosphorylation of N-acetyl-L-glutamate. This is Acetylglutamate kinase from Solidesulfovibrio magneticus (strain ATCC 700980 / DSM 13731 / RS-1) (Desulfovibrio magneticus).